Here is a 115-residue protein sequence, read N- to C-terminus: uncharacterized protein (115 aa).

Positions 1–115 constitute an MSP domain; sequence MGVEISLDPP…ETVIKLSAAE (115 aa).

This is an uncharacterized protein from Caenorhabditis elegans.